Reading from the N-terminus, the 360-residue chain is UDP-3-O-acylglucosamine N-acyltransferase (360 aa).

Catalysis depends on His256, which acts as the Proton acceptor. The tract at residues 341–360 (EGSGAETAARPDDDRDEGRG) is disordered. Positions 349-360 (ARPDDDRDEGRG) are enriched in basic and acidic residues.

The protein belongs to the transferase hexapeptide repeat family. LpxD subfamily. Homotrimer.

The enzyme catalyses a UDP-3-O-[(3R)-3-hydroxyacyl]-alpha-D-glucosamine + a (3R)-hydroxyacyl-[ACP] = a UDP-2-N,3-O-bis[(3R)-3-hydroxyacyl]-alpha-D-glucosamine + holo-[ACP] + H(+). Its pathway is bacterial outer membrane biogenesis; LPS lipid A biosynthesis. Functionally, catalyzes the N-acylation of UDP-3-O-acylglucosamine using 3-hydroxyacyl-ACP as the acyl donor. Is involved in the biosynthesis of lipid A, a phosphorylated glycolipid that anchors the lipopolysaccharide to the outer membrane of the cell. This chain is UDP-3-O-acylglucosamine N-acyltransferase, found in Rhodopseudomonas palustris (strain TIE-1).